The chain runs to 376 residues: Flap endonuclease 1 (376 aa).

Residues M1 to A105 are N-domain. D34 contacts Mg(2+). 2 residues coordinate DNA: R47 and R71. Residues D87, E159, E161, D180, and D182 each contribute to the Mg(2+) site. An I-domain region spans residues Q123–Y254. E159 contacts DNA. DNA-binding residues include G232 and D234. Residue D234 participates in Mg(2+) binding. The interaction with PCNA stretch occupies residues A336 to F344. The tract at residues S352–K376 is disordered. Over residues V360–K376 the composition is skewed to basic residues.

This sequence belongs to the XPG/RAD2 endonuclease family. FEN1 subfamily. As to quaternary structure, interacts with PCNA. Three molecules of FEN1 bind to one PCNA trimer with each molecule binding to one PCNA monomer. PCNA stimulates the nuclease activity without altering cleavage specificity. Mg(2+) is required as a cofactor. Phosphorylated. Phosphorylation upon DNA damage induces relocalization to the nuclear plasma.

It is found in the nucleus. Its subcellular location is the nucleolus. The protein localises to the nucleoplasm. It localises to the mitochondrion. Its function is as follows. Structure-specific nuclease with 5'-flap endonuclease and 5'-3' exonuclease activities involved in DNA replication and repair. During DNA replication, cleaves the 5'-overhanging flap structure that is generated by displacement synthesis when DNA polymerase encounters the 5'-end of a downstream Okazaki fragment. It enters the flap from the 5'-end and then tracks to cleave the flap base, leaving a nick for ligation. Also involved in the long patch base excision repair (LP-BER) pathway, by cleaving within the apurinic/apyrimidinic (AP) site-terminated flap. Acts as a genome stabilization factor that prevents flaps from equilibrating into structures that lead to duplications and deletions. Also possesses 5'-3' exonuclease activity on nicked or gapped double-stranded DNA, and exhibits RNase H activity. Also involved in replication and repair of rDNA and in repairing mitochondrial DNA. The sequence is that of Flap endonuclease 1 from Entamoeba dispar (strain ATCC PRA-260 / SAW760).